The chain runs to 547 residues: Chaperonin GroEL (547 aa).

ATP contacts are provided by residues 30 to 33 (TLGP), Lys-51, 87 to 91 (DGTTT), Gly-415, and Asp-496. The disordered stretch occupies residues 527 to 547 (SDKEEPMPMRGGMGGMGGMDF). The segment covering 537–547 (GGMGGMGGMDF) has biased composition (gly residues).

Belongs to the chaperonin (HSP60) family. As to quaternary structure, forms a cylinder of 14 subunits composed of two heptameric rings stacked back-to-back. Interacts with the co-chaperonin GroES.

It is found in the cytoplasm. The catalysed reaction is ATP + H2O + a folded polypeptide = ADP + phosphate + an unfolded polypeptide.. Its function is as follows. Together with its co-chaperonin GroES, plays an essential role in assisting protein folding. The GroEL-GroES system forms a nano-cage that allows encapsulation of the non-native substrate proteins and provides a physical environment optimized to promote and accelerate protein folding. The sequence is that of Chaperonin GroEL from Rickettsia massiliae (strain Mtu5).